The sequence spans 613 residues: UvrABC system protein C (613 aa).

Positions 12 to 89 (DHPGVYIMHD…IKQHRPRYNV (78 aa)) constitute a GIY-YIG domain. In terms of domain architecture, UVR spans 199–234 (TALVKELKEQMEAAAARLEFEKAARLRDQLRAVQEV).

This sequence belongs to the UvrC family. As to quaternary structure, interacts with UvrB in an incision complex.

Its subcellular location is the cytoplasm. Its function is as follows. The UvrABC repair system catalyzes the recognition and processing of DNA lesions. UvrC both incises the 5' and 3' sides of the lesion. The N-terminal half is responsible for the 3' incision and the C-terminal half is responsible for the 5' incision. This Moorella thermoacetica (strain ATCC 39073 / JCM 9320) protein is UvrABC system protein C.